Consider the following 105-residue polypeptide: uncharacterized protein (105 aa).

Serine 2 carries the N-acetylserine modification.

This is an uncharacterized protein from Saccharomyces cerevisiae (strain ATCC 204508 / S288c) (Baker's yeast).